A 396-amino-acid polypeptide reads, in one-letter code: Phosphoglycerate kinase (396 aa).

Residues 21–23, Arg-36, 59–62, Arg-114, and Arg-147 contribute to the substrate site; these read DIN and HFGR. Residues Lys-197, Glu-319, and 349 to 352 each bind ATP; that span reads GGDT.

This sequence belongs to the phosphoglycerate kinase family. As to quaternary structure, monomer.

It is found in the cytoplasm. It carries out the reaction (2R)-3-phosphoglycerate + ATP = (2R)-3-phospho-glyceroyl phosphate + ADP. It functions in the pathway carbohydrate degradation; glycolysis; pyruvate from D-glyceraldehyde 3-phosphate: step 2/5. This chain is Phosphoglycerate kinase, found in Jannaschia sp. (strain CCS1).